The chain runs to 205 residues: Golgi to ER traffic protein 1 (205 aa).

Topologically, residues 1–9 are lumenal; the sequence is MFELQPSSI. The helical transmembrane segment at 10–29 threads the bilayer; that stretch reads VVLVFCVLAIKVCISLIGKT. The Cytoplasmic portion of the chain corresponds to 30–116; it reads TIQDRIWYLY…QISKLVNLAI (87 aa). Residues 53-103 are a coiled coil; the sequence is ALAQKREELVRVNKERRAISAQDEYAKWTKLNRQFDKLNSEVNDLAEATSS. Residues 117-137 form a helical membrane-spanning segment; sequence AATTTAPIWFSRIWYRKVVLF. Residues 138 to 161 are Lumenal-facing; the sequence is YLPPKVFPYYIEWVLALPFIVTGG. The chain crosses the membrane as a helical span at residues 162–178; that stretch reads VGLTVWMFALNSVLSSL. Topologically, residues 179–205 are cytoplasmic; that stretch reads EFLIKFYLEEPVKKPEAPAASEAQTKQ.

Belongs to the WRB/GET1 family. Component of the Golgi to ER traffic (GET) complex, which is composed of GET1, GET2 and GET3. Within the complex, GET1 and GET2 form a heterotetramer which is stabilized by phosphatidylinositol binding and which binds to the GET3 homodimer.

The protein resides in the endoplasmic reticulum membrane. It localises to the golgi apparatus membrane. Functionally, required for the post-translational delivery of tail-anchored (TA) proteins to the endoplasmic reticulum. Together with GET2, acts as a membrane receptor for soluble GET3, which recognizes and selectively binds the transmembrane domain of TA proteins in the cytosol. The GET complex cooperates with the HDEL receptor ERD2 to mediate the ATP-dependent retrieval of resident ER proteins that contain a C-terminal H-D-E-L retention signal from the Golgi to the ER. The chain is Golgi to ER traffic protein 1 from Clavispora lusitaniae (strain ATCC 42720) (Yeast).